Consider the following 184-residue polypeptide: Protein GrpE (184 aa).

A disordered region spans residues 1–24 (MADEQLDEKNLNSEEAGAVNGDAR).

It belongs to the GrpE family. Homodimer.

The protein resides in the cytoplasm. Functionally, participates actively in the response to hyperosmotic and heat shock by preventing the aggregation of stress-denatured proteins, in association with DnaK and GrpE. It is the nucleotide exchange factor for DnaK and may function as a thermosensor. Unfolded proteins bind initially to DnaJ; upon interaction with the DnaJ-bound protein, DnaK hydrolyzes its bound ATP, resulting in the formation of a stable complex. GrpE releases ADP from DnaK; ATP binding to DnaK triggers the release of the substrate protein, thus completing the reaction cycle. Several rounds of ATP-dependent interactions between DnaJ, DnaK and GrpE are required for fully efficient folding. The chain is Protein GrpE from Pseudomonas entomophila (strain L48).